Reading from the N-terminus, the 642-residue chain is MRKVMLAEKAGFCFGVKRAVDMALLTQKEYNKKIYTLGELIHNNDVVDKLKDNNVYPIGIEDIDNLKENDVILIRSHGISEEIYKILLSKGLTVINATCPFVTKIQEKVKKYNELGYDIVIVGDKYHPEVIGINGWCDNKAIISKQGENLENITSESKVCIVSQTTEKLENWEKVLKEVKNRAIEVISFNTICNATSERQKIAKDLSNKVDFMVVIGGKQSSNTTKLYEICKSNCNETIHVENSGEIPENILKNKNCVIGVTAGASTPDWIIEEAISKMSENQISNETNNEMADAMKFIAENEGKIYVGASVTGEIIQVSEKEVFLNINYKRDGVIPKSEIDDDGKDLKELFTVGDKIVAKIIKLKDADNYVVLSVKELQREQGYKEIKEAFENKTTLNVVVKEDVKGGIIASYKGIRIFIPASHVELFHVDNLKEYIGKSFDVAIIEYSTKKRQTKIVASRRALLSKEKEKVEETVWNKLEEGQVVEGEVKRLTDFGAFVEIEGVDGLLHVSEISWGRVEKPADVLKIGDKIKVYVLSVDKENKKLSLSVKKLTENPWNNVEEKYPVGSVVLGKVIRFADFGAFVKLEPGVDGLVHISEISHKRIAKPSDALNVGEEIKAKILEVSSEEKKIGLSIREVEE.

Residues 1 to 282 are 4-hydroxy-3-methylbut-2-enyl diphosphate reductase; it reads MRKVMLAEKA…EEAISKMSEN (282 aa). Position 13 (Cys-13) interacts with [4Fe-4S] cluster. Residues His-42 and His-77 each coordinate (2E)-4-hydroxy-3-methylbut-2-enyl diphosphate. Dimethylallyl diphosphate is bound by residues His-42 and His-77. 2 residues coordinate isopentenyl diphosphate: His-42 and His-77. Cys-99 provides a ligand contact to [4Fe-4S] cluster. His-127 is a binding site for (2E)-4-hydroxy-3-methylbut-2-enyl diphosphate. His-127 contributes to the dimethylallyl diphosphate binding site. His-127 is a binding site for isopentenyl diphosphate. Residue Glu-129 is the Proton donor of the active site. (2E)-4-hydroxy-3-methylbut-2-enyl diphosphate is bound at residue Thr-165. Cys-193 lines the [4Fe-4S] cluster pocket. Positions 221, 222, 223, and 266 each coordinate (2E)-4-hydroxy-3-methylbut-2-enyl diphosphate. Dimethylallyl diphosphate is bound by residues Ser-221, Ser-222, Asn-223, and Ser-266. Ser-221, Ser-222, Asn-223, and Ser-266 together coordinate isopentenyl diphosphate. S1 motif domains are found at residues 309–377, 484–552, and 569–638; these read GASV…LSVK, GQVV…LSVK, and GSVV…LSIR.

This sequence in the N-terminal section; belongs to the IspH family. [4Fe-4S] cluster serves as cofactor.

It catalyses the reaction isopentenyl diphosphate + 2 oxidized [2Fe-2S]-[ferredoxin] + H2O = (2E)-4-hydroxy-3-methylbut-2-enyl diphosphate + 2 reduced [2Fe-2S]-[ferredoxin] + 2 H(+). The catalysed reaction is dimethylallyl diphosphate + 2 oxidized [2Fe-2S]-[ferredoxin] + H2O = (2E)-4-hydroxy-3-methylbut-2-enyl diphosphate + 2 reduced [2Fe-2S]-[ferredoxin] + 2 H(+). The protein operates within isoprenoid biosynthesis; dimethylallyl diphosphate biosynthesis; dimethylallyl diphosphate from (2E)-4-hydroxy-3-methylbutenyl diphosphate: step 1/1. Its pathway is isoprenoid biosynthesis; isopentenyl diphosphate biosynthesis via DXP pathway; isopentenyl diphosphate from 1-deoxy-D-xylulose 5-phosphate: step 6/6. In terms of biological role, catalyzes the conversion of 1-hydroxy-2-methyl-2-(E)-butenyl 4-diphosphate (HMBPP) into a mixture of isopentenyl diphosphate (IPP) and dimethylallyl diphosphate (DMAPP). Acts in the terminal step of the DOXP/MEP pathway for isoprenoid precursor biosynthesis. In Clostridium acetobutylicum (strain ATCC 824 / DSM 792 / JCM 1419 / IAM 19013 / LMG 5710 / NBRC 13948 / NRRL B-527 / VKM B-1787 / 2291 / W), this protein is 4-hydroxy-3-methylbut-2-enyl diphosphate reductase.